A 310-amino-acid polypeptide reads, in one-letter code: Transcription factor RAX3 (310 aa).

HTH myb-type domains are found at residues 9–62 (KANV…LNYL) and 63–117 (RPNI…KKKL). DNA-binding regions (H-T-H motif) lie at residues 38–62 (WIAL…LNYL) and 90–113 (WSII…NTRL).

As to expression, ubiquitous.

It localises to the nucleus. Its function is as follows. Transcription activator. Positively regulates axillary meristems (AMs) formation and development, especially during inflorescence. This is Transcription factor RAX3 (RAX3) from Arabidopsis thaliana (Mouse-ear cress).